Consider the following 371-residue polypeptide: F-box protein At2g41170 (371 aa).

The region spanning 56-102 (KMSLLDLPDLTLDCILEKLSPSELCAMTSVCSELRDKCVSDHLWEKH) is the F-box domain.

The protein is F-box protein At2g41170 of Arabidopsis thaliana (Mouse-ear cress).